Reading from the N-terminus, the 323-residue chain is Elongation factor P--(R)-beta-lysine ligase (323 aa).

Substrate is bound at residue Ser-76 to Glu-78. ATP contacts are provided by residues Arg-100–Glu-102 and Asn-109. Tyr-118 serves as a coordination point for substrate. ATP is bound at residue Glu-242–Leu-243. Substrate is bound at residue Glu-249. Gly-298 lines the ATP pocket.

It belongs to the class-II aminoacyl-tRNA synthetase family. EpmA subfamily. As to quaternary structure, homodimer.

It catalyses the reaction D-beta-lysine + L-lysyl-[protein] + ATP = N(6)-((3R)-3,6-diaminohexanoyl)-L-lysyl-[protein] + AMP + diphosphate + H(+). With EpmB is involved in the beta-lysylation step of the post-translational modification of translation elongation factor P (EF-P). Catalyzes the ATP-dependent activation of (R)-beta-lysine produced by EpmB, forming a lysyl-adenylate, from which the beta-lysyl moiety is then transferred to the epsilon-amino group of a conserved specific lysine residue in EF-P. The polypeptide is Elongation factor P--(R)-beta-lysine ligase (Mannheimia succiniciproducens (strain KCTC 0769BP / MBEL55E)).